The following is a 263-amino-acid chain: uncharacterized protein (263 aa).

An N-terminal signal peptide occupies residues 1–22 (MRYLKRVVLYRIVMVLSVFIIG). A lipid anchor (N-palmitoyl cysteine) is attached at Cys23. Cys23 is lipidated: S-diacylglycerol cysteine.

It belongs to the staphylococcal tandem lipoprotein family.

It localises to the cell membrane. This is an uncharacterized protein from Staphylococcus aureus (strain bovine RF122 / ET3-1).